A 2684-amino-acid chain; its full sequence is Teneurin-1 (2684 aa).

Disordered regions lie at residues 1 to 37 (MFQH…HDYT), 127 to 156 (TTSS…PTYS), and 170 to 204 (GTNQ…KKFD). Over 1–216 (MFQHRTTNAQ…SDTCSRWPSK (216 aa)) the chain is Cytoplasmic. Residues 11–24 (GPPPNRPMPRPPAG) show a composition bias toward pro residues. Residues 127–136 (TTSSTLSPAS) are compositionally biased toward low complexity. A helical transmembrane segment spans residues 217-237 (WNILLAAALLVALFVICILLF). Residues 238-2684 (RAPNYVYTQP…VHSWKFRKSE (2447 aa)) are Extracellular-facing. 2 EGF-like domains span residues 463–499 (TGRT…KECE) and 501–534 (RHNW…EACE). Disulfide bonds link Cys-467/Cys-476, Cys-472/Cys-487, Cys-489/Cys-498, Cys-505/Cys-516, Cys-510/Cys-522, and Cys-524/Cys-533. The interval 576-614 (PQAQSPPRRGQEPTESSKTRKAQVKPTPTSEKKKESREL) is disordered. 2 stretches are compositionally biased toward basic and acidic residues: residues 584–593 (RGQEPTESSK) and 605–614 (SEKKKESREL). 2 consecutive EGF-like domains span residues 650-684 (DSVD…SNCT) and 716-753 (AIDG…VDCS). Intrachain disulfides connect Cys-654-Cys-666, Cys-659-Cys-672, Cys-674-Cys-683, Cys-720-Cys-730, Cys-724-Cys-741, and Cys-743-Cys-752. NHL repeat units follow at residues 1276–1317 (DSCG…IDTT), 1334–1378 (RTCA…VVHD), 1398–1441 (SASA…VRKL), and 1470–1513 (AVSL…VSAR).

It belongs to the tenascin family. Teneurin subfamily. Probably proteolytically processed to generate a N-terminal intracellular domain. Isoform 1 is mainly expressed in organs derived from the mesoderm, including the pharynx, vulva muscles, gonad distal tip cells, intestine and several tail neurons. Isoform 2 is mainly expressed in the organs derived from the ectoderm, including hypodermal cells, head ganglion neurons and tail neurons (at protein level).

Its subcellular location is the nucleus. It is found in the cell membrane. The protein localises to the membrane. Its function is as follows. Plays a role in the gonadal basement membrane maintenance and/or adhesion early in development. Contributes to the guidance of pharyngeal neurons. The polypeptide is Teneurin-1 (ten-1) (Caenorhabditis elegans).